A 291-amino-acid chain; its full sequence is 33 kDa chaperonin (291 aa).

Disulfide bonds link Cys237–Cys239 and Cys270–Cys273.

It belongs to the HSP33 family. Under oxidizing conditions two disulfide bonds are formed involving the reactive cysteines. Under reducing conditions zinc is bound to the reactive cysteines and the protein is inactive.

It is found in the cytoplasm. Its function is as follows. Redox regulated molecular chaperone. Protects both thermally unfolding and oxidatively damaged proteins from irreversible aggregation. Plays an important role in the bacterial defense system toward oxidative stress. In Bacillus cereus (strain B4264), this protein is 33 kDa chaperonin.